A 317-amino-acid chain; its full sequence is Ribosomal protein L11 methyltransferase (317 aa).

S-adenosyl-L-methionine contacts are provided by Thr158, Gly179, Asp201, and Asn244.

The protein belongs to the methyltransferase superfamily. PrmA family.

It is found in the cytoplasm. It catalyses the reaction L-lysyl-[protein] + 3 S-adenosyl-L-methionine = N(6),N(6),N(6)-trimethyl-L-lysyl-[protein] + 3 S-adenosyl-L-homocysteine + 3 H(+). Methylates ribosomal protein L11. In Streptococcus pyogenes serotype M3 (strain ATCC BAA-595 / MGAS315), this protein is Ribosomal protein L11 methyltransferase.